The primary structure comprises 319 residues: ATP-dependent 6-phosphofructokinase (319 aa).

Glycine 11 lines the ATP pocket. 21-25 (RAVTR) provides a ligand contact to ADP. Residues 72 to 73 (RF) and 102 to 105 (GDGS) contribute to the ATP site. Position 103 (aspartate 103) interacts with Mg(2+). 125–127 (SID) contacts substrate. Residue aspartate 127 is the Proton acceptor of the active site. Arginine 154 lines the ADP pocket. Residues arginine 162 and 169–171 (MGR) contribute to the substrate site. ADP is bound by residues 185–187 (GAD) and 213–215 (KKH). Residues glutamate 222, arginine 243, and 249-252 (HMQR) contribute to the substrate site.

The protein belongs to the phosphofructokinase type A (PFKA) family. ATP-dependent PFK group I subfamily. Prokaryotic clade 'B1' sub-subfamily. As to quaternary structure, homotetramer. Requires Mg(2+) as cofactor.

Its subcellular location is the cytoplasm. The catalysed reaction is beta-D-fructose 6-phosphate + ATP = beta-D-fructose 1,6-bisphosphate + ADP + H(+). It functions in the pathway carbohydrate degradation; glycolysis; D-glyceraldehyde 3-phosphate and glycerone phosphate from D-glucose: step 3/4. Allosterically activated by ADP and other diphosphonucleosides, and allosterically inhibited by phosphoenolpyruvate. Its function is as follows. Catalyzes the phosphorylation of D-fructose 6-phosphate to fructose 1,6-bisphosphate by ATP, the first committing step of glycolysis. In Lactobacillus gasseri (strain ATCC 33323 / DSM 20243 / BCRC 14619 / CIP 102991 / JCM 1131 / KCTC 3163 / NCIMB 11718 / NCTC 13722 / AM63), this protein is ATP-dependent 6-phosphofructokinase.